An 860-amino-acid chain; its full sequence is Leucine--tRNA ligase (860 aa).

The 'HIGH' region motif lies at 42–52; it reads PYPSGRLHMGH. The 'KMSKS' region motif lies at 619-623; sequence KMSKS. Lysine 622 contacts ATP.

The protein belongs to the class-I aminoacyl-tRNA synthetase family.

Its subcellular location is the cytoplasm. It carries out the reaction tRNA(Leu) + L-leucine + ATP = L-leucyl-tRNA(Leu) + AMP + diphosphate. The sequence is that of Leucine--tRNA ligase from Photorhabdus laumondii subsp. laumondii (strain DSM 15139 / CIP 105565 / TT01) (Photorhabdus luminescens subsp. laumondii).